We begin with the raw amino-acid sequence, 247 residues long: 6-phosphogluconolactonase (247 aa).

This sequence belongs to the glucosamine/galactosamine-6-phosphate isomerase family. 6-phosphogluconolactonase subfamily.

It catalyses the reaction 6-phospho-D-glucono-1,5-lactone + H2O = 6-phospho-D-gluconate + H(+). It functions in the pathway carbohydrate degradation; pentose phosphate pathway; D-ribulose 5-phosphate from D-glucose 6-phosphate (oxidative stage): step 2/3. Its function is as follows. Hydrolysis of 6-phosphogluconolactone to 6-phosphogluconate. The chain is 6-phosphogluconolactonase (pgl) from Mycobacterium bovis (strain ATCC BAA-935 / AF2122/97).